The primary structure comprises 306 residues: Transcription initiation factor IIB (306 aa).

2 consecutive repeat copies span residues Asn122 to Leu205 and Asp216 to Gln297.

It belongs to the TFIIB family.

Stabilizes TBP binding to an archaeal box-A promoter. Also responsible for recruiting RNA polymerase II to the pre-initiation complex (DNA-TBP-TFIIB). The sequence is that of Transcription initiation factor IIB from Saccharolobus shibatae (strain ATCC 51178 / DSM 5389 / JCM 8931 / NBRC 15437 / B12) (Sulfolobus shibatae).